The chain runs to 237 residues: Uridylate kinase (237 aa).

11-14 (KLSG) contributes to the ATP binding site. A UMP-binding site is contributed by Gly53. Residues Gly54 and Arg58 each coordinate ATP. UMP contacts are provided by residues Asp73 and 134 to 141 (TGNPFFTT). Positions 161, 167, and 170 each coordinate ATP.

Belongs to the UMP kinase family. As to quaternary structure, homohexamer.

Its subcellular location is the cytoplasm. The catalysed reaction is UMP + ATP = UDP + ADP. It participates in pyrimidine metabolism; CTP biosynthesis via de novo pathway; UDP from UMP (UMPK route): step 1/1. With respect to regulation, inhibited by UTP. Functionally, catalyzes the reversible phosphorylation of UMP to UDP. This is Uridylate kinase from Nitrosomonas eutropha (strain DSM 101675 / C91 / Nm57).